Reading from the N-terminus, the 87-residue chain is Small ribosomal subunit protein bS20 (87 aa).

This sequence belongs to the bacterial ribosomal protein bS20 family.

Binds directly to 16S ribosomal RNA. The polypeptide is Small ribosomal subunit protein bS20 (Halothermothrix orenii (strain H 168 / OCM 544 / DSM 9562)).